Reading from the N-terminus, the 341-residue chain is MTENNRAGAVPLSSILLQMITGYWVTQSLYVAAKLGIADLVADAPKPIEELAAKTGAKAPLLKRVLRTIASIGVFTETEPGIFGITPLAALLRSGTPDSMRPQAIMHGEEQYRAWADVLHNVQTGETAFEKEFGTSYFGYLAKHPEADRVFNEAQAGYTKQVAHAVVDAYDFSPFKTVIDIGAGYGPLLSAILRSQPEARGILFDQPHVAQAAGKRLAEAGVGDRCGTVGGDFFVEVPADGDVYILSLLLHDWDDQRSIEILRNCRRAMPAHGKLLIVELVLPEGEEPFFGKWLDLHMLVLLGAQERTADEFKTLFAASGFALERVLPTASGLSIVEARPI.

S-adenosyl-L-methionine contacts are provided by residues D205 and G231–F233. Catalysis depends on H251, which acts as the Proton acceptor.

Belongs to the class I-like SAM-binding methyltransferase superfamily. Cation-independent O-methyltransferase family. In terms of assembly, homodimer.

The catalysed reaction is 1,6-dihydroxyphenazine + S-adenosyl-L-methionine = 1-hydroxy-6-methoxyphenazine + S-adenosyl-L-homocysteine + H(+). It catalyses the reaction 1-hydroxy-6-methoxyphenazine + S-adenosyl-L-methionine = 1,6-dimethoxyphenazine + S-adenosyl-L-homocysteine + H(+). The enzyme catalyses 1-hydroxy-6-methoxyphenazine N(10)-oxide + S-adenosyl-L-methionine = 1,6-dimethoxyphenazine N(5)-oxide + S-adenosyl-L-homocysteine. It carries out the reaction 1,6-dihydroxyphenazine N(5),N(10)-dioxide + S-adenosyl-L-methionine = 1-hydroxy-6-methoxyphenazine N(5),N(10)-dioxide + S-adenosyl-L-homocysteine. The catalysed reaction is 1-hydroxy-6-methoxyphenazine N(5),N(10)-dioxide + S-adenosyl-L-methionine = 1,6-dimethoxyphenazine N(5),N(10)-dioxide + S-adenosyl-L-homocysteine. In terms of biological role, involved in the biosynthesis of phenazine natural products including myxin, an N(5),N(10)-dioxide phenazine antiobiotic, which has antimicrobial activity. O-methyltransferase, which converts iodinin (1,6-dihydroxyphenazine N(5),N(10)-dioxide) to myxin (1-hydroxy-6-methoxyphenazine N(5),N(10)-dioxide). Catalyzes both monomethoxy and dimethoxy formation of phenazine natural compounds. Acts on a wide variety of substrates, catalyzing O-methylation of phenazines with non-, mono- or di-N-oxide. Highest activity with 1,6-dihydroxyphenazine (DHP) as substrate. Less active with monohydroxy-containing and monohydroxy-monomethoxy-containing phenazines. Least active with non-phenazine substrates, such as 8-hydroxyquinoline and 6-hydroxyquinoline. Is not able to convert 1-hydroxyphenazine to 1-hydroxy-N5-methylphenazine (pyocyanine), hence does not function as an N-methyltransferase. The chain is Phenazine O-methyltransferase PhzM from Lysobacter antibioticus.